The sequence spans 612 residues: Threonine--tRNA ligase (612 aa).

A catalytic region spans residues 218 to 509; that stretch reads DHRKLGVELG…LSEHFWGNFP (292 aa). Residues C310, H361, and H486 each coordinate Zn(2+).

Belongs to the class-II aminoacyl-tRNA synthetase family. In terms of assembly, homodimer. Zn(2+) serves as cofactor.

It is found in the cytoplasm. It carries out the reaction tRNA(Thr) + L-threonine + ATP = L-threonyl-tRNA(Thr) + AMP + diphosphate + H(+). Functionally, catalyzes the attachment of threonine to tRNA(Thr) in a two-step reaction: L-threonine is first activated by ATP to form Thr-AMP and then transferred to the acceptor end of tRNA(Thr). Also edits incorrectly charged L-seryl-tRNA(Thr). This chain is Threonine--tRNA ligase, found in Helicobacter acinonychis (strain Sheeba).